Here is a 425-residue protein sequence, read N- to C-terminus: GPI mannosyltransferase 1 (425 aa).

Transmembrane regions (helical) follow at residues 11–31, 85–105, 144–164, 166–186, 233–253, 295–315, 340–360, 367–387, and 398–418; these read VIGA…WQDA, FFAF…WLIA, LLGV…VSLA, VILG…PAVV, IHLT…MYIL, FESL…PLVL, SQYF…SSLM, ILVG…GYNL, and GLFL…GIIV.

It belongs to the PIGM family.

Its subcellular location is the endoplasmic reticulum membrane. It functions in the pathway glycolipid biosynthesis; glycosylphosphatidylinositol-anchor biosynthesis. Functionally, mannosyltransferase involved in glycosylphosphatidylinositol-anchor biosynthesis. Transfers the first alpha-1,4-mannose to GlcN-acyl-PI during GPI precursor assembly. Required for cell wall integrity. The sequence is that of GPI mannosyltransferase 1 (gpi14) from Aspergillus fumigatus (strain ATCC MYA-4609 / CBS 101355 / FGSC A1100 / Af293) (Neosartorya fumigata).